The sequence spans 734 residues: Photosystem I P700 chlorophyll a apoprotein A2 (734 aa).

A run of 8 helical transmembrane segments spans residues 46–69, 135–158, 175–199, 273–291, 330–353, 369–395, 417–439, and 517–535; these read IFAS…FHVA, LYFG…LHLQ, LNHH…HVAI, IAHH…GHMY, LHMQ…QHMY, AALY…IFFV, AIIS…LYIH, and FLVH…LILV. Residues cysteine 559 and cysteine 568 each contribute to the [4Fe-4S] cluster site. A run of 2 helical transmembrane segments spans residues 575–596 and 643–665; these read AFYL…YWHW and QAVW…MFLI. 3 residues coordinate chlorophyll a: histidine 654, methionine 662, and tyrosine 670. Position 671 (tryptophan 671) interacts with phylloquinone. The helical transmembrane segment at 707–727 threads the bilayer; it reads LVGLAHFTVGFIFTFAPFVIA.

It belongs to the PsaA/PsaB family. In terms of assembly, the PsaA/B heterodimer binds the P700 chlorophyll special pair and subsequent electron acceptors. PSI consists of a core antenna complex that captures photons, and an electron transfer chain that converts photonic excitation into a charge separation. The eukaryotic PSI reaction center is composed of at least 11 subunits. P700 is a chlorophyll a/chlorophyll a' dimer, A0 is one or more chlorophyll a, A1 is one or both phylloquinones and FX is a shared 4Fe-4S iron-sulfur center. is required as a cofactor.

It localises to the plastid. The protein resides in the chloroplast thylakoid membrane. The catalysed reaction is reduced [plastocyanin] + hnu + oxidized [2Fe-2S]-[ferredoxin] = oxidized [plastocyanin] + reduced [2Fe-2S]-[ferredoxin]. In terms of biological role, psaA and PsaB bind P700, the primary electron donor of photosystem I (PSI), as well as the electron acceptors A0, A1 and FX. PSI is a plastocyanin/cytochrome c6-ferredoxin oxidoreductase, converting photonic excitation into a charge separation, which transfers an electron from the donor P700 chlorophyll pair to the spectroscopically characterized acceptors A0, A1, FX, FA and FB in turn. Oxidized P700 is reduced on the lumenal side of the thylakoid membrane by plastocyanin or cytochrome c6. The sequence is that of Photosystem I P700 chlorophyll a apoprotein A2 from Emiliania huxleyi (Coccolithophore).